Here is a 219-residue protein sequence, read N- to C-terminus: MISGSEYHKEYMKGTTTVGLICEDGVVLATDKRATMGNLIADKEAKKLYKIDDYIAMTIAGSVGDAQSLIRLLSAEAKIYKMRTGNNMTPLSCTTLTSNVLHGNRHYPLLTQLIIGGYDLINGPKLFSLDPVGGINEESSFTATGSGSPTAYGVLEAEYKSEINIEKGLLIAVKALISAMQRDAYSGNGISLAKIDKTGVTLYSDEEIENLVKKVTKKK.

The propeptide at M1–G14 is removed in mature form; by autocatalysis. T15 acts as the Nucleophile in catalysis.

The protein belongs to the peptidase T1B family. In terms of assembly, the 20S proteasome core is composed of 14 alpha and 14 beta subunits that assemble into four stacked heptameric rings, resulting in a barrel-shaped structure. The two inner rings, each composed of seven catalytic beta subunits, are sandwiched by two outer rings, each composed of seven alpha subunits. The catalytic chamber with the active sites is on the inside of the barrel. Has a gated structure, the ends of the cylinder being occluded by the N-termini of the alpha-subunits. Is capped at one or both ends by the proteasome regulatory ATPase, PAN.

The protein localises to the cytoplasm. It carries out the reaction Cleavage of peptide bonds with very broad specificity.. The formation of the proteasomal ATPase PAN-20S proteasome complex, via the docking of the C-termini of PAN into the intersubunit pockets in the alpha-rings, triggers opening of the gate for substrate entry. Interconversion between the open-gate and close-gate conformations leads to a dynamic regulation of the 20S proteasome proteolysis activity. Functionally, component of the proteasome core, a large protease complex with broad specificity involved in protein degradation. This chain is Proteasome subunit beta, found in Methanococcus vannielii (strain ATCC 35089 / DSM 1224 / JCM 13029 / OCM 148 / SB).